The sequence spans 256 residues: Probable cyclic nucleotide phosphodiesterase Fisuc_1441/FSU_1912 (256 aa).

Residues aspartate 20, histidine 22, aspartate 59, asparagine 89, histidine 156, histidine 196, and histidine 198 each coordinate Fe cation. Residues histidine 22, aspartate 59, and asparagine 89 to histidine 90 each bind AMP. Histidine 198 lines the AMP pocket.

It belongs to the cyclic nucleotide phosphodiesterase class-III family. Fe(2+) is required as a cofactor.

This Fibrobacter succinogenes (strain ATCC 19169 / S85) protein is Probable cyclic nucleotide phosphodiesterase Fisuc_1441/FSU_1912.